A 309-amino-acid chain; its full sequence is MEFKHISVLLEETIDSLNIKEDGVYVDCTLGGGGHSKEILKKLSHKGKLIGIDQDTSAIKAAKERLKDYENVIYVHNNFYNIDSILEELDIDKVDGIIMDLGVSSYQLDEASRGFSYMKDAPLDMRMNREENLSAYNVVNSYEEEELFKILKNYGEEKFSRKIARFIVEKRTENPIETTGELVEIIRKAIPAKFQREGHPAKRTFQAIRIEVNKELQILNKAIEDSVNRLNKDGRLSIITFHSLEDRIVKVKFKELEKPCTCPPSFPICVCGKEPQIKIITKKPIEPSKEEKEINSRSRSAKLRVCRKI.

S-adenosyl-L-methionine is bound by residues 33 to 35, Asp53, Phe79, Asp100, and Gln107; that span reads GGH.

It belongs to the methyltransferase superfamily. RsmH family.

The protein localises to the cytoplasm. The catalysed reaction is cytidine(1402) in 16S rRNA + S-adenosyl-L-methionine = N(4)-methylcytidine(1402) in 16S rRNA + S-adenosyl-L-homocysteine + H(+). In terms of biological role, specifically methylates the N4 position of cytidine in position 1402 (C1402) of 16S rRNA. This Clostridium botulinum (strain Kyoto / Type A2) protein is Ribosomal RNA small subunit methyltransferase H.